The following is a 43-amino-acid chain: Protein PsbN (43 aa).

Residues 5–27 (TLVAISISGLLVSFTGYALYTAF) form a helical membrane-spanning segment.

Belongs to the PsbN family.

It localises to the plastid. The protein resides in the chloroplast thylakoid membrane. Its function is as follows. May play a role in photosystem I and II biogenesis. The protein is Protein PsbN of Coelogyne cristata (Orchid).